A 416-amino-acid chain; its full sequence is Adenylosuccinate synthetase (416 aa).

Residues 11–17 (GDEGKGK) and 39–41 (GHT) each bind GTP. The Proton acceptor role is filled by D12. Mg(2+)-binding residues include D12 and G39. Residues 12 to 15 (DEGK), 37 to 40 (NAGH), T125, R139, Q214, T229, and R290 each bind IMP. H40 acts as the Proton donor in catalysis. Position 286 to 292 (286 to 292 (TTTGRPR)) interacts with substrate. GTP-binding positions include R292, 318–320 (KLD), and 405–407 (SLG).

This sequence belongs to the adenylosuccinate synthetase family. Homodimer. The cofactor is Mg(2+).

The protein localises to the cytoplasm. It catalyses the reaction IMP + L-aspartate + GTP = N(6)-(1,2-dicarboxyethyl)-AMP + GDP + phosphate + 2 H(+). It participates in purine metabolism; AMP biosynthesis via de novo pathway; AMP from IMP: step 1/2. In terms of biological role, plays an important role in the de novo pathway of purine nucleotide biosynthesis. Catalyzes the first committed step in the biosynthesis of AMP from IMP. The polypeptide is Adenylosuccinate synthetase (Picrophilus torridus (strain ATCC 700027 / DSM 9790 / JCM 10055 / NBRC 100828 / KAW 2/3)).